We begin with the raw amino-acid sequence, 359 residues long: Cell division protein ZipA (359 aa).

Topologically, residues 1-4 are periplasmic; that stretch reads MDLN. A helical membrane pass occupies residues 5 to 25; sequence TILIILGILALVALVAHGLWS. Residues 26-359 lie on the Cytoplasmic side of the membrane; it reads NRREKSQYFE…AEEEYLAKIK (334 aa). The segment at 78–101 is disordered; sequence PPVQQPLNTEPEPITQETPVRAEP.

The protein belongs to the ZipA family. As to quaternary structure, interacts with FtsZ via their C-terminal domains.

Its subcellular location is the cell inner membrane. Functionally, essential cell division protein that stabilizes the FtsZ protofilaments by cross-linking them and that serves as a cytoplasmic membrane anchor for the Z ring. Also required for the recruitment to the septal ring of downstream cell division proteins. The polypeptide is Cell division protein ZipA (Mannheimia succiniciproducens (strain KCTC 0769BP / MBEL55E)).